The following is a 265-amino-acid chain: 3-methyl-2-oxobutanoate hydroxymethyltransferase (265 aa).

Mg(2+)-binding residues include aspartate 44 and aspartate 83. Residues 44–45, aspartate 83, and lysine 113 each bind 3-methyl-2-oxobutanoate; that span reads DS. Glutamate 115 contacts Mg(2+). The active-site Proton acceptor is glutamate 182.

It belongs to the PanB family. Homodecamer; pentamer of dimers. Mg(2+) serves as cofactor.

It localises to the cytoplasm. It catalyses the reaction 3-methyl-2-oxobutanoate + (6R)-5,10-methylene-5,6,7,8-tetrahydrofolate + H2O = 2-dehydropantoate + (6S)-5,6,7,8-tetrahydrofolate. The protein operates within cofactor biosynthesis; (R)-pantothenate biosynthesis; (R)-pantoate from 3-methyl-2-oxobutanoate: step 1/2. Catalyzes the reversible reaction in which hydroxymethyl group from 5,10-methylenetetrahydrofolate is transferred onto alpha-ketoisovalerate to form ketopantoate. In Aquifex aeolicus (strain VF5), this protein is 3-methyl-2-oxobutanoate hydroxymethyltransferase.